A 402-amino-acid chain; its full sequence is Non-homologous end joining protein Ku (402 aa).

Residues 12–185 (ISFGLVTIPV…VAALTGIAQP (174 aa)) form the Ku domain. Residues 261-402 (QRAAGGATGG…GPDETAPGGP (142 aa)) form a disordered region. 2 stretches are compositionally biased toward low complexity: residues 299-308 (GDPAASVPGV) and 332-343 (VPGVPATAVPGT). Residues 344 to 358 (PGAPVPTAPGVPSAP) show a composition bias toward pro residues. A compositionally biased stretch (low complexity) spans 359–376 (APGTSPTSVPGVQTAPNG).

This sequence belongs to the prokaryotic Ku family. As to quaternary structure, homodimer. Interacts with LigD.

With LigD forms a non-homologous end joining (NHEJ) DNA repair enzyme, which repairs dsDNA breaks with reduced fidelity. Binds linear dsDNA with 5'- and 3'- overhangs but not closed circular dsDNA nor ssDNA. Recruits and stimulates the ligase activity of LigD. This is Non-homologous end joining protein Ku from Symbiobacterium thermophilum (strain DSM 24528 / JCM 14929 / IAM 14863 / T).